An 886-amino-acid polypeptide reads, in one-letter code: Semaphorin-6B (886 aa).

An N-terminal signal peptide occupies residues 1-26; the sequence is MWTPRVPPPRPALSFFLLLLLGVTYG. The Extracellular segment spans residues 27 to 605; it reads LFPEEPPPLS…VSVNLLVTSS (579 aa). Residues 32 to 525 enclose the Sema domain; that stretch reads PPPLSVAPRD…FPRCVVRVPV (494 aa). N75 is a glycosylation site (N-linked (GlcNAc...) asparagine). Cystine bridges form between C117-C127 and C145-C154. N-linked (GlcNAc...) asparagine glycosylation is found at N156 and N292. Cystine bridges form between C268-C379 and C293-C338. N-linked (GlcNAc...) asparagine glycosylation is found at N387, N442, and N463. 4 disulfides stabilise this stretch: C487–C519, C528–C546, C534–C580, and C538–C554. The chain crosses the membrane as a helical span at residues 606–626; sequence VAAFVVGAVVSGFSVGWFVGL. The Cytoplasmic segment spans residues 627-886; sequence RERRELARRK…TGERTAPPVP (260 aa). Disordered stretches follow at residues 655–677, 697–731, and 761–886; these read RLGERRGTGPGGRGGAGGGPGGP, HGGPHDLDTGLLPTPEQTPLPQKRLPTPHPHAHAL, and EQPQ…PPVP. Residues 662–674 are compositionally biased toward gly residues; sequence TGPGGRGGAGGGP. Residue R667 is modified to Omega-N-methylarginine. Positions 707–718 are enriched in low complexity; sequence LLPTPEQTPLPQ.

The protein belongs to the semaphorin family. In terms of assembly, homodimer. Binds specifically the SH3 domain of the protooncogene C-SRC. In terms of tissue distribution, in adulthood, it is expressed ubiquitously.

It localises to the cell membrane. Its function is as follows. Functions as a cell surface repellent for mossy fibers of developing neurons in the hippocampus where it plays a role in axon guidance. May function through the PLXNA4 receptor expressed by mossy cell axons. The protein is Semaphorin-6B (Sema6b) of Mus musculus (Mouse).